A 505-amino-acid polypeptide reads, in one-letter code: Monocarboxylate transporter 6 (505 aa).

At 1–17 the chain is on the cytoplasmic side; sequence MPQALERADGSWAWVVL. The chain crosses the membrane as a helical span at residues 18-38; sequence LATMVTQGLTLGFPTCIGIFF. Residues 39-53 are Extracellular-facing; it reads TELQWEFQASNSETS. Residues 54–74 traverse the membrane as a helical segment; the sequence is WFPSILTAVLHMAGPLCSILV. At 75–80 the chain is on the cytoplasmic side; sequence GRFGCR. The helical transmembrane segment at 81-101 threads the bilayer; sequence VTVMLGGVLASLGMVASSFSH. The Extracellular portion of the chain corresponds to 102–110; sequence NLSQLYFTA. A helical membrane pass occupies residues 111–131; the sequence is GFITGLGMCFSFQSSITVLGF. Over 132–137 the chain is Cytoplasmic; sequence YFVRRR. The helical transmembrane segment at 138-158 threads the bilayer; it reads VLANALASMGVSLGITLWPLL. At 159 to 171 the chain is on the extracellular side; sequence SRYLLENLGWRGT. Residues 172-192 traverse the membrane as a helical segment; the sequence is FLVFGGIFLHCCICGAIIRPV. Residues 193-239 lie on the Cytoplasmic side of the membrane; it reads ATSVAPETKECPPPPPETPALGCLAACGRTIQRHLAFDILRHNTGYC. Residues 240–260 form a helical membrane-spanning segment; that stretch reads VYILGVMWSVLGFPLPQVFLV. Residues 261-274 are Extracellular-facing; the sequence is PYAMWHSVDEQQAA. Residues 275–295 traverse the membrane as a helical segment; it reads LLISIIGFSNIFLRPLAGLMA. The Cytoplasmic segment spans residues 296–305; sequence GRPAFASHRK. A helical transmembrane segment spans residues 306–326; it reads YLFSLALLLNGLTNLVCAASG. Over 327 to 329 the chain is Extracellular; sequence DFW. A helical membrane pass occupies residues 330–350; the sequence is VLVGYCLAYSVSMSGIGALIF. The Cytoplasmic segment spans residues 351–367; sequence QVLMDIVPMDQFPRALG. The chain crosses the membrane as a helical span at residues 368-388; the sequence is LFTVLDGLAFLISPPLAGLLL. The Extracellular segment spans residues 389-396; sequence DATNNFSY. A helical transmembrane segment spans residues 397-417; it reads VFYMSSFFLISAALFMGGSFY. The Cytoplasmic portion of the chain corresponds to 418–505; sequence ALQKKEQGKQ…QTALGWNSPT (88 aa). The tract at residues 443-464 is disordered; sequence KDGPGKQRSPEIMCQSSRQPRP.

Belongs to the major facilitator superfamily. Monocarboxylate porter (TC 2.A.1.13) family. In terms of tissue distribution, highly expressed in kidney.

It is found in the cell membrane. Its function is as follows. Proton-linked monocarboxylate transporter. Catalyzes the rapid transport across the plasma membrane of many monocarboxylates such as lactate, pyruvate, branched-chain oxo acids derived from leucine, valine and isoleucine, and the ketone bodies acetoacetate, beta-hydroxybutyrate and acetate. In Homo sapiens (Human), this protein is Monocarboxylate transporter 6 (SLC16A5).